Consider the following 286-residue polypeptide: Ribosomal RNA small subunit methyltransferase H (286 aa).

Residues 25-27 (GGH), Asp-45, Leu-79, Asp-93, and Gln-100 each bind S-adenosyl-L-methionine.

It belongs to the methyltransferase superfamily. RsmH family.

Its subcellular location is the cytoplasm. It catalyses the reaction cytidine(1402) in 16S rRNA + S-adenosyl-L-methionine = N(4)-methylcytidine(1402) in 16S rRNA + S-adenosyl-L-homocysteine + H(+). In terms of biological role, specifically methylates the N4 position of cytidine in position 1402 (C1402) of 16S rRNA. The sequence is that of Ribosomal RNA small subunit methyltransferase H from Petrotoga mobilis (strain DSM 10674 / SJ95).